Consider the following 264-residue polypeptide: Glutamate racemase (264 aa).

Substrate is bound by residues 12–13 (DS) and 44–45 (YG). The Proton donor/acceptor role is filled by Cys76. 77-78 (NT) contacts substrate. Cys186 acts as the Proton donor/acceptor in catalysis. Residue 187-188 (TH) participates in substrate binding.

Belongs to the aspartate/glutamate racemases family.

It catalyses the reaction L-glutamate = D-glutamate. The protein operates within cell wall biogenesis; peptidoglycan biosynthesis. Functionally, provides the (R)-glutamate required for cell wall biosynthesis. The chain is Glutamate racemase from Fusobacterium nucleatum subsp. nucleatum (strain ATCC 25586 / DSM 15643 / BCRC 10681 / CIP 101130 / JCM 8532 / KCTC 2640 / LMG 13131 / VPI 4355).